Here is a 748-residue protein sequence, read N- to C-terminus: Cytosolic phospholipase A2 (748 aa).

The tract at residues 1–178 (MSFIDPYQHI…MRKLLGPKKS (178 aa)) is phospholipid binding. A Phosphoserine modification is found at S2. Residues 6 to 122 (PYQHIIVEHQ…KVGEKKEVPF (117 aa)) form the C2 domain. Residues D40, T41, D43, N65, D93, A94, and N95 each contribute to the Ca(2+) site. The 602-residue stretch at 138 to 739 (VCSSPDLRFS…SNVEARRFFN (602 aa)) folds into the PLA2c domain. S228 serves as the catalytic Nucleophile. At T268 the chain carries Phosphothreonine. Positions 428-458 (HIVSNDSSDSDDESQEPKGTEGEDAEREYQN) are disordered. Phosphoserine occurs at positions 434, 435, and 437. Residues 442–458 (QEPKGTEGEDAEREYQN) are compositionally biased toward basic and acidic residues. S505 is modified (phosphoserine; by MAPK). Position 514 is a phosphoserine (S514). K540 participates in a covalent cross-link: Glycyl lysine isopeptide (Lys-Gly) (interchain with G-Cter in SUMO2). Catalysis depends on D548, which acts as the Proton acceptor. K605 is covalently cross-linked (Glycyl lysine isopeptide (Lys-Gly) (interchain with G-Cter in SUMO2)). Phosphoserine occurs at positions 726 and 728.

As to quaternary structure, interacts with KAT5. Phosphorylated at both Ser-505 and Ser-726 in response to mitogenic stimuli.

The protein localises to the cytoplasm. The protein resides in the golgi apparatus membrane. It localises to the nucleus envelope. The enzyme catalyses a 1,2-diacyl-sn-glycero-3-phosphocholine + H2O = a 1-acyl-sn-glycero-3-phosphocholine + a fatty acid + H(+). It catalyses the reaction a 1-O-alkyl-2-acyl-sn-glycero-3-phosphocholine + H2O = a 1-O-alkyl-sn-glycero-3-phosphocholine + a fatty acid + H(+). The catalysed reaction is a 1-acyl-sn-glycero-3-phosphocholine + H2O = sn-glycerol 3-phosphocholine + a fatty acid + H(+). It carries out the reaction 1-hexadecanoyl-2-(5Z,8Z,11Z,14Z-eicosatetraenoyl)-sn-glycero-3-phosphocholine + H2O = 1-hexadecanoyl-sn-glycero-3-phosphocholine + (5Z,8Z,11Z,14Z)-eicosatetraenoate + H(+). The enzyme catalyses 1,2-di-(5Z,8Z,11Z,14Z-eicosatetraenoyl)-sn-glycero-3-phosphocholine + H2O = 1-(5Z,8Z,11Z,14Z-eicosatetraenoyl)-sn-glycero-3-phosphocholine + (5Z,8Z,11Z,14Z)-eicosatetraenoate + H(+). It catalyses the reaction 1-octadecanoyl-2-(5Z,8Z,11Z,14Z-eicosatetraenoyl)-sn-glycero-3-phosphocholine + H2O = 1-octadecanoyl-sn-glycero-3-phosphocholine + (5Z,8Z,11Z,14Z)-eicosatetraenoate + H(+). The catalysed reaction is 1-hexadecanoyl-2-(9Z,12Z-octadecadienoyl)-sn-glycero-3-phosphocholine + H2O = (9Z,12Z)-octadecadienoate + 1-hexadecanoyl-sn-glycero-3-phosphocholine + H(+). It carries out the reaction 1-octadecanoyl-2-(9Z,12Z,15Z-octadecatrienoyl)-sn-glycero-3-phosphocholine + H2O = (9Z,12Z,15Z)-octadecatrienoate + 1-octadecanoyl-sn-glycero-3-phosphocholine + H(+). The enzyme catalyses 1-(5Z,8Z,11Z,14Z-eicosatetraenoyl)-2-hexadecanoyl-sn-glycero-3-phosphocholine + H2O = 1-(5Z,8Z,11Z,14Z-eicosatetraenoyl)-sn-glycero-3-phosphocholine + hexadecanoate + H(+). It catalyses the reaction 1-O-hexadecyl-2-(5Z,8Z,11Z,14Z)-eicosatetraenoyl-sn-glycero-3-phosphocholine + H2O = 1-O-hexadecyl-sn-glycero-3-phosphocholine + (5Z,8Z,11Z,14Z)-eicosatetraenoate + H(+). The catalysed reaction is 1,2-di-(9Z-octadecenoyl)-sn-glycero-3-phospho-(1'-sn-glycerol) + H2O = 1-(9Z-octadecenoyl)-sn-glycero-3-phospho-(1'-sn-glycerol) + (9Z)-octadecenoate + H(+). It carries out the reaction 1-octadecanoyl-2-(5Z,8Z,11Z,14Z-eicosatetraenoyl)-sn-glycero-3-phosphate + H2O = 1-octadecanoyl-sn-glycero-3-phosphate + (5Z,8Z,11Z,14Z)-eicosatetraenoate + H(+). The enzyme catalyses 1-hexadecanoyl-sn-glycero-3-phosphocholine + H2O = sn-glycerol 3-phosphocholine + hexadecanoate + H(+). It catalyses the reaction 2-(prostaglandin E2)-sn-glycero-3-phosphoethanolamine + H2O = sn-glycero-3-phosphoethanolamine + prostaglandin E2 + H(+). The catalysed reaction is 2-[(15S)-hydroxy-(5Z,8Z,11Z,13E)-eicosatetraenoyl]-sn-glycero-3-phosphocholine + H2O = (15S)-hydroxy-(5Z,8Z,11Z,13E)-eicosatetraenoate + sn-glycerol 3-phosphocholine + H(+). It carries out the reaction 2-[(15R)-hydroxy-(5Z,8Z,11Z,13E)-eicosatetraenoyl]-sn-glycero-3-phosphocholine + H2O = (15R)-hydroxy-(5Z,8Z,11Z,13E)-eicosatetraenoate + sn-glycerol 3-phosphocholine + H(+). The enzyme catalyses 2-(prostaglandin E2)-sn-glycero-3-phosphocholine + H2O = prostaglandin E2 + sn-glycerol 3-phosphocholine + H(+). It catalyses the reaction 2-[(11R)-hydroxy-(5Z,8Z,12E,14Z)-eicosatetraenoyl]-sn-glycero-3-phosphocholine + H2O = (11R)-hydroxy-(5Z,8Z,12E,14Z)-eicosatetraenoate + sn-glycerol 3-phosphocholine + H(+). The catalysed reaction is 1-(5Z,8Z,11Z,14Z-eicosatetraenoyl)-2-O-hexadecyl-sn-glycero-3-phosphocholine + H2O = 2-O-hexadecyl-sn-glycero-3-phosphocholine + (5Z,8Z,11Z,14Z)-eicosatetraenoate + H(+). It carries out the reaction 1-octadecanoyl-2-(5Z,8Z,11Z,14Z-eicosatetraenoyl)-sn-glycero-3-phosphocholine + glycerol = 1-(5Z,8Z,11Z,14Z-eicosatetraenoyl)-glycerol + 1-octadecanoyl-sn-glycero-3-phosphocholine. The enzyme catalyses 1-octadecanoyl-2-(9Z,12Z,15Z-octadecatrienoyl)-sn-glycero-3-phosphocholine + glycerol = 1-(9Z,12Z,15Z-octadecatrienoyl)-glycerol + 1-octadecanoyl-sn-glycero-3-phosphocholine. Its pathway is membrane lipid metabolism; glycerophospholipid metabolism. It functions in the pathway lipid metabolism; arachidonate metabolism. It participates in lipid metabolism; prostaglandin biosynthesis. The protein operates within lipid metabolism; leukotriene B4 biosynthesis. With respect to regulation, activated by cytosolic calcium, which is necessary for binding to membrane lipids. Activated by phosphorylation in response to mitogenic stimuli. Its function is as follows. Has primarily calcium-dependent phospholipase and lysophospholipase activities, with a major role in membrane lipid remodeling and biosynthesis of lipid mediators of the inflammatory response. Plays an important role in embryo implantation and parturition through its ability to trigger prostanoid production. Preferentially hydrolyzes the ester bond of the fatty acyl group attached at sn-2 position of phospholipids (phospholipase A2 activity). Selectively hydrolyzes sn-2 arachidonoyl group from membrane phospholipids, providing the precursor for eicosanoid biosynthesis via the cyclooxygenase pathway. In an alternative pathway of eicosanoid biosynthesis, hydrolyzes sn-2 fatty acyl chain of eicosanoid lysophopholipids to release free bioactive eicosanoids. Hydrolyzes the ester bond of the fatty acyl group attached at sn-1 position of phospholipids (phospholipase A1 activity) only if an ether linkage rather than an ester linkage is present at the sn-2 position. This hydrolysis is not stereospecific. Has calcium-independent phospholipase A2 and lysophospholipase activities in the presence of phosphoinositides. Has O-acyltransferase activity. Catalyzes the transfer of fatty acyl chains from phospholipids to a primary hydroxyl group of glycerol (sn-1 or sn-3), potentially contributing to monoacylglycerol synthesis. The polypeptide is Cytosolic phospholipase A2 (PLA2G4A) (Oryctolagus cuniculus (Rabbit)).